Consider the following 209-residue polypeptide: uncharacterized protein (209 aa).

This is an uncharacterized protein from Arabidopsis thaliana (Mouse-ear cress).